The following is a 175-amino-acid chain: Protein LAZY 3 (175 aa).

Residues 9-39 (RKLSGKKRVPTSDSSQEPSSPPLSKEVQGLP) form a disordered region. The IGT motif signature appears at 44–50 (TFLAIGT).

The protein belongs to the LAZY family. As to expression, specifically expressed in roots. Expressed in root tips of young seedlings.

Functionally, involved in the regulation of root gravitropism. Functions redundantly with LAZY2 and LAZY4 in the control of root gravitropism. Functions redundantly with LAZY1, LAZY2 and LAZY4 to control plant architecture by coupling gravity sensing to the formation of auxin gradients. In Arabidopsis thaliana (Mouse-ear cress), this protein is Protein LAZY 3.